Here is a 252-residue protein sequence, read N- to C-terminus: Cytochrome b6-f complex iron-sulfur subunit, chloroplastic (252 aa).

Residues 94–114 (LVLAAVAPVVASAGGCYLYYF) form a helical membrane-spanning segment. In terms of domain architecture, Rieske spans 141–235 (WFKSHKKNAR…VEDDNGKILL (95 aa)). [2Fe-2S] cluster is bound by residues cysteine 181, histidine 183, cysteine 199, and histidine 202. Cysteine 186 and cysteine 201 form a disulfide bridge.

It belongs to the Rieske iron-sulfur protein family. As to quaternary structure, the 4 large subunits of the cytochrome b6-f complex are cytochrome b6, subunit IV (17 kDa polypeptide, petD), cytochrome f and the Rieske protein, while the 4 small subunits are petG, petL, petM and petN. The complex functions as a dimer. [2Fe-2S] cluster is required as a cofactor.

Its subcellular location is the plastid. The protein resides in the chloroplast thylakoid membrane. It catalyses the reaction 2 oxidized [plastocyanin] + a plastoquinol + 2 H(+)(in) = 2 reduced [plastocyanin] + a plastoquinone + 4 H(+)(out). Functionally, component of the cytochrome b6-f complex, which mediates electron transfer between photosystem II (PSII) and photosystem I (PSI), cyclic electron flow around PSI, and state transitions. In Bigelowiella natans (Pedinomonas minutissima), this protein is Cytochrome b6-f complex iron-sulfur subunit, chloroplastic (petC).